We begin with the raw amino-acid sequence, 74 residues long: Putative defensin-like protein 27 (74 aa).

Residues 1–19 form the signal peptide; it reads MVHPRFVFFAFLALSVLLA. 4 disulfide bridges follow: Cys-36–Cys-74, Cys-46–Cys-65, Cys-51–Cys-70, and Cys-55–Cys-72.

The protein belongs to the DEFL family.

The protein resides in the secreted. The polypeptide is Putative defensin-like protein 27 (Arabidopsis thaliana (Mouse-ear cress)).